A 478-amino-acid chain; its full sequence is Poly(A) RNA polymerase cid11 (478 aa).

The Mg(2+) site is built by Asp106 and Asp108. Residues Ser263–Thr317 enclose the PAP-associated domain. Residues Gln428–Thr447 form a disordered region.

The protein belongs to the DNA polymerase type-B-like family. Mg(2+) is required as a cofactor. It depends on Mn(2+) as a cofactor.

Its subcellular location is the cytoplasm. It is found in the nucleus. The enzyme catalyses RNA(n) + ATP = RNA(n)-3'-adenine ribonucleotide + diphosphate. In Schizosaccharomyces pombe (strain 972 / ATCC 24843) (Fission yeast), this protein is Poly(A) RNA polymerase cid11 (cid11).